The chain runs to 258 residues: Imidazole glycerol phosphate synthase subunit HisF (258 aa).

Active-site residues include Asp11 and Asp130.

It belongs to the HisA/HisF family. Heterodimer of HisH and HisF.

The protein localises to the cytoplasm. The enzyme catalyses 5-[(5-phospho-1-deoxy-D-ribulos-1-ylimino)methylamino]-1-(5-phospho-beta-D-ribosyl)imidazole-4-carboxamide + L-glutamine = D-erythro-1-(imidazol-4-yl)glycerol 3-phosphate + 5-amino-1-(5-phospho-beta-D-ribosyl)imidazole-4-carboxamide + L-glutamate + H(+). Its pathway is amino-acid biosynthesis; L-histidine biosynthesis; L-histidine from 5-phospho-alpha-D-ribose 1-diphosphate: step 5/9. Functionally, IGPS catalyzes the conversion of PRFAR and glutamine to IGP, AICAR and glutamate. The HisF subunit catalyzes the cyclization activity that produces IGP and AICAR from PRFAR using the ammonia provided by the HisH subunit. This Azorhizobium caulinodans (strain ATCC 43989 / DSM 5975 / JCM 20966 / LMG 6465 / NBRC 14845 / NCIMB 13405 / ORS 571) protein is Imidazole glycerol phosphate synthase subunit HisF.